The following is a 203-amino-acid chain: dITP/XTP pyrophosphatase (203 aa).

15–20 is a binding site for substrate; it reads SGNAGK. Mg(2+) is bound by residues glutamate 45 and aspartate 74. The Proton acceptor role is filled by aspartate 74. Substrate-binding positions include serine 75, 153 to 156, lysine 176, and 181 to 182; these read FGYD and HR.

It belongs to the HAM1 NTPase family. In terms of assembly, homodimer. Requires Mg(2+) as cofactor.

The catalysed reaction is XTP + H2O = XMP + diphosphate + H(+). The enzyme catalyses dITP + H2O = dIMP + diphosphate + H(+). It carries out the reaction ITP + H2O = IMP + diphosphate + H(+). In terms of biological role, pyrophosphatase that catalyzes the hydrolysis of nucleoside triphosphates to their monophosphate derivatives, with a high preference for the non-canonical purine nucleotides XTP (xanthosine triphosphate), dITP (deoxyinosine triphosphate) and ITP. Seems to function as a house-cleaning enzyme that removes non-canonical purine nucleotides from the nucleotide pool, thus preventing their incorporation into DNA/RNA and avoiding chromosomal lesions. The chain is dITP/XTP pyrophosphatase from Prochlorococcus marinus (strain MIT 9313).